The following is a 120-amino-acid chain: Aspartate 1-decarboxylase (120 aa).

Catalysis depends on serine 25, which acts as the Schiff-base intermediate with substrate; via pyruvic acid. At serine 25 the chain carries Pyruvic acid (Ser). Residue threonine 57 coordinates substrate. The active-site Proton donor is tyrosine 58. 73–75 (GAA) serves as a coordination point for substrate.

The protein belongs to the PanD family. As to quaternary structure, heterooctamer of four alpha and four beta subunits. Requires pyruvate as cofactor. Is synthesized initially as an inactive proenzyme, which is activated by self-cleavage at a specific serine bond to produce a beta-subunit with a hydroxyl group at its C-terminus and an alpha-subunit with a pyruvoyl group at its N-terminus.

It is found in the cytoplasm. The enzyme catalyses L-aspartate + H(+) = beta-alanine + CO2. It participates in cofactor biosynthesis; (R)-pantothenate biosynthesis; beta-alanine from L-aspartate: step 1/1. Its function is as follows. Catalyzes the pyruvoyl-dependent decarboxylation of aspartate to produce beta-alanine. The polypeptide is Aspartate 1-decarboxylase (Cupriavidus taiwanensis (strain DSM 17343 / BCRC 17206 / CCUG 44338 / CIP 107171 / LMG 19424 / R1) (Ralstonia taiwanensis (strain LMG 19424))).